A 1012-amino-acid polypeptide reads, in one-letter code: RNA-binding protein 26 (1012 aa).

Residue Lys-94 forms a Glycyl lysine isopeptide (Lys-Gly) (interchain with G-Cter in SUMO2) linkage. The stretch at 98 to 127 (LQHQEKDIKKEELTKEEEREKKFSRRLNHS) forms a coiled coil. A Glycyl lysine isopeptide (Lys-Gly) (interchain with G-Cter in SUMO1); alternate cross-link involves residue Lys-106. A Glycyl lysine isopeptide (Lys-Gly) (interchain with G-Cter in SUMO2); alternate cross-link involves residue Lys-106. The span at 106–118 (KKEELTKEEEREK) shows a compositional bias: basic and acidic residues. Positions 106-236 (KKEELTKEEE…PLENNYTPVS (131 aa)) are disordered. Residue Ser-127 is modified to Phosphoserine. A compositionally biased stretch (basic and acidic residues) spans 134 to 168 (RYRDNRSRDERKKDDRSRKRDYDRNPPRRDSYRDR). Positions 169-186 (YNRRRGRSRSYSRSRSRS) are enriched in basic residues. Composition is skewed to basic and acidic residues over residues 187-201 (WSKERLRDRDRDRSR) and 209-227 (RSRERDLVKPKYDLDRTDP). A C3H1-type zinc finger spans residues 288–316 (PMPKKRCRDYDEKGFCMRGDMCPFDHGSD). A compositionally biased stretch (pro residues) spans 334–388 (QPPVVEGPPPPGLPPPPPILTPPPVNLRPPVPPPGPLPPSLPPVTGPPPPLPPLQ). Disordered regions lie at residues 334-404 (QPPV…SSVP) and 465-520 (IGLT…NFNR). Residues 394-404 (APPNSATSSVP) are compositionally biased toward low complexity. Ser-501 carries the phosphoserine modification. N6-acetyllysine is present on Lys-515. Ser-523 bears the Phosphoserine mark. The RRM 1 domain maps to 537–611 (TKLELRKVPP…RFIKVYWHRE (75 aa)). A Phosphoserine modification is found at Ser-621. Residues 647 to 667 (PVPSATTEPAEAQSATSELPQ) are disordered. Coiled coils occupy residues 724 to 800 (DNNE…KSTS) and 828 to 852 (KKMQAGEEVTELRRKYTELQLEAAK). The interval 858 to 889 (SGRGRGIHTRGRGTAHGRGRGRGRGRGVPGHA) is disordered. Basic residues predominate over residues 862-882 (RGIHTRGRGTAHGRGRGRGRG). One can recognise an RRM 2 domain in the interval 896 to 965 (RALEISAFTE…QDLKLAWNKP (70 aa)). Positions 970 to 1012 (SAVDTEEAEPDEEEFQEESLVDDSLLQDDDEEEEDNESRSWRR) are disordered. Residues 973–1005 (DTEEAEPDEEEFQEESLVDDSLLQDDDEEEEDN) are compositionally biased toward acidic residues.

As to expression, expressed in testis and ovary.

May be involved in the turnover of nuclear polyadenylated (pA+) RNA. The sequence is that of RNA-binding protein 26 from Mus musculus (Mouse).